A 328-amino-acid chain; its full sequence is UPF0194 membrane protein YPA_1093 (328 aa).

The signal sequence occupies residues 1-22 (MNRKKIIVAAVIVALLATLAYG). Coiled coils occupy residues 80–109 (YLNA…REEE) and 141–209 (KAVS…ILLA).

Belongs to the UPF0194 family.

The protein localises to the periplasm. The protein is UPF0194 membrane protein YPA_1093 of Yersinia pestis bv. Antiqua (strain Antiqua).